We begin with the raw amino-acid sequence, 206 residues long: LexA repressor (206 aa).

The segment at residues 28 to 48 (VREIGQAVGLASSSTVHGHLS) is a DNA-binding region (H-T-H motif). Active-site for autocatalytic cleavage activity residues include Ser128 and Lys166.

It belongs to the peptidase S24 family. Homodimer.

It catalyses the reaction Hydrolysis of Ala-|-Gly bond in repressor LexA.. Functionally, represses a number of genes involved in the response to DNA damage (SOS response), including recA and lexA. In the presence of single-stranded DNA, RecA interacts with LexA causing an autocatalytic cleavage which disrupts the DNA-binding part of LexA, leading to derepression of the SOS regulon and eventually DNA repair. This Bacillus thuringiensis (strain Al Hakam) protein is LexA repressor.